Here is a 316-residue protein sequence, read N- to C-terminus: Apolipoprotein E (316 aa).

The first 18 residues, 1-18 (MKVLWVALVITLLAGCQA), serve as a signal peptide directing secretion. Tandem repeats lie at residues 79-100 (VLMD…GQLA), 101-122 (PIAQ…ARLA), 123-144 (SDME…AMMG), 145-166 (QTTD…KRLL), 167-188 (RDAE…EGSE), 189-210 (RSVS…ARAA), 211-232 (TVGT…QKLR), and 233-254 (GRVE…EQLE). An 8 X 22 AA approximate tandem repeats region spans residues 79-254 (VLMDETMKEV…HLEEMREQLE (176 aa)). Methionine 142 carries the post-translational modification Methionine sulfoxide. Residues 157–167 (HLRKLRKRLLR) are LDL and other lipoprotein receptors binding. Residue 161–164 (LRKR) participates in heparin binding. Residues 209–289 (AATVGTLASQ…SWFEPLVEDM (81 aa)) form a lipid-binding and lipoprotein association region. 228–235 (HQKLRGRV) provides a ligand contact to heparin. The interval 265–316 (SQMRLQAEAFQARLKSWFEPLVEDMQRQWAGLVEKVQLAMATSSTSAPSENH) is homooligomerization. A specificity for association with VLDL region spans residues 277–289 (RLKSWFEPLVEDM).

It belongs to the apolipoprotein A1/A4/E family. In terms of assembly, homotetramer. May interact with ABCA1; functionally associated with ABCA1 in the biogenesis of HDLs. May interact with APP/A4 amyloid-beta peptide; the interaction is extremely stable in vitro but its physiological significance is unclear. May interact with MAPT. May interact with MAP2. In the cerebrospinal fluid, interacts with secreted SORL1. Interacts with PMEL; this allows the loading of PMEL luminal fragment on ILVs to induce fibril nucleation. APOE exists as multiple glycosylated and sialylated glycoforms within cells and in plasma. The extent of glycosylation and sialylation are tissue and context specific. In terms of processing, glycated in plasma VLDL. Post-translationally, phosphorylated by FAM20C in the extracellular medium.

Its subcellular location is the secreted. It is found in the extracellular space. The protein resides in the extracellular matrix. It localises to the extracellular vesicle. The protein localises to the endosome. Its subcellular location is the multivesicular body. APOE is an apolipoprotein, a protein associating with lipid particles, that mainly functions in lipoprotein-mediated lipid transport between organs via the plasma and interstitial fluids. APOE is a core component of plasma lipoproteins and is involved in their production, conversion and clearance. Apolipoproteins are amphipathic molecules that interact both with lipids of the lipoprotein particle core and the aqueous environment of the plasma. As such, APOE associates with chylomicrons, chylomicron remnants, very low density lipoproteins (VLDL) and intermediate density lipoproteins (IDL) but shows a preferential binding to high-density lipoproteins (HDL). It also binds a wide range of cellular receptors including the LDL receptor/LDLR and the very low-density lipoprotein receptor/VLDLR that mediate the cellular uptake of the APOE-containing lipoprotein particles. Finally, APOE also has a heparin-binding activity and binds heparan-sulfate proteoglycans on the surface of cells, a property that supports the capture and the receptor-mediated uptake of APOE-containing lipoproteins by cells. This chain is Apolipoprotein E (APOE), found in Lipotes vexillifer (Yangtze river dolphin).